The sequence spans 648 residues: UDP-galactose:fucoside alpha-3-galactosyltransferase (648 aa).

WD repeat units follow at residues 320 to 358 (NHTD…GNDT), 372 to 420 (HKRG…IQTF), 422 to 461 (GHTG…FKRV), 464 to 505 (GHNG…NIIK), 507 to 546 (NQGG…NFND), 556 to 595 (NENS…NNNN), and 617 to 648 (HLNS…SWDL).

It belongs to the glycosyltransferase 77 family. The cofactor is Mn(2+).

It localises to the cytoplasm. It catalyses the reaction an alpha-L-fucosyl-(1-&gt;2)-beta-D-galactosyl derivative + UDP-alpha-D-galactose = an alpha-D-galactosyl-(1-&gt;3)-[alpha-L-fucosyl-(1-&gt;2)]-beta-D-galactosyl derivative + UDP + H(+). It functions in the pathway protein modification; protein glycosylation. Its activity is regulated as follows. Stimulated by dithiothreitol (DTT) in vitro. Totally inhibited by EDTA. Specifically catalyzes the transfer of a galactosyl residue to the hydroxyproline-linked saccharide on Skp1 protein (fpaA/fpaB). Catalyzes the formation of a Gal-alpha-1,3-Fuc linkage, leading to Gal-Fuc-Gal-GlcNAc-HyPro143-Skp1. The polypeptide is UDP-galactose:fucoside alpha-3-galactosyltransferase (agtA) (Dictyostelium discoideum (Social amoeba)).